The chain runs to 367 residues: CCN family member 4 (367 aa).

An N-terminal signal peptide occupies residues 1-22; it reads MRWLLPWTLAAVAVLMVGNILA. Positions 45-118 constitute an IGFBP N-terminal domain; it reads RPEFCKWPCE…RYAIGVCAQV (74 aa). 4 cysteine pairs are disulfide-bonded: Cys49/Cys73, Cys53/Cys75, Cys55/Cys76, and Cys62/Cys79. The N-linked (GlcNAc...) asparagine glycan is linked to Asn86. 2 disulfides stabilise this stretch: Cys87-Cys101 and Cys93-Cys115. A VWFC domain is found at 121–186; the sequence is VGCVLDGVRY…GQCCEQWVCD (66 aa). Residue Asn143 is glycosylated (N-linked (GlcNAc...) asparagine). One can recognise a TSP type-1 domain in the interval 215–260; sequence NCIAYTSPWSPCSTTCGLGISTRISNVNARCWPEQESRLCNLRPCD. 5 disulfide bridges follow: Cys273–Cys310, Cys290–Cys324, Cys301–Cys340, Cys304–Cys342, and Cys309–Cys346. The 75-residue stretch at 273–347 folds into the CTCK domain; sequence CLAVYQPEEA…NACFCNLSCR (75 aa). An N-linked (GlcNAc...) asparagine glycan is attached at Asn284. The N-linked (GlcNAc...) asparagine glycan is linked to Asn343.

It belongs to the CCN family.

Its subcellular location is the secreted. In terms of biological role, downstream regulator in the Wnt/Frizzled-signaling pathway. Associated with cell survival. Adheres to skin and melanoma fibroblasts. In vitro binding to skin fibroblasts occurs through the proteoglycans, decorin and biglycan. The polypeptide is CCN family member 4 (Ccn4) (Rattus norvegicus (Rat)).